The following is a 461-amino-acid chain: Cysteine--tRNA ligase (461 aa).

C28 contacts Zn(2+). The short motif at 30 to 40 (ITVYDLCHIGH) is the 'HIGH' region element. Zn(2+) is bound by residues C209, H234, and E238. The 'KMSKS' region signature appears at 266–270 (KMSKS). Residue K269 participates in ATP binding.

This sequence belongs to the class-I aminoacyl-tRNA synthetase family. In terms of assembly, monomer. The cofactor is Zn(2+).

It is found in the cytoplasm. It carries out the reaction tRNA(Cys) + L-cysteine + ATP = L-cysteinyl-tRNA(Cys) + AMP + diphosphate. The chain is Cysteine--tRNA ligase from Escherichia coli O6:K15:H31 (strain 536 / UPEC).